The sequence spans 298 residues: UDP-3-O-acyl-N-acetylglucosamine deacetylase (298 aa).

H80, H239, and D243 together coordinate Zn(2+). Catalysis depends on H266, which acts as the Proton donor.

Belongs to the LpxC family. Zn(2+) is required as a cofactor.

It carries out the reaction a UDP-3-O-[(3R)-3-hydroxyacyl]-N-acetyl-alpha-D-glucosamine + H2O = a UDP-3-O-[(3R)-3-hydroxyacyl]-alpha-D-glucosamine + acetate. The protein operates within glycolipid biosynthesis; lipid IV(A) biosynthesis; lipid IV(A) from (3R)-3-hydroxytetradecanoyl-[acyl-carrier-protein] and UDP-N-acetyl-alpha-D-glucosamine: step 2/6. Its function is as follows. Catalyzes the hydrolysis of UDP-3-O-myristoyl-N-acetylglucosamine to form UDP-3-O-myristoylglucosamine and acetate, the committed step in lipid A biosynthesis. This chain is UDP-3-O-acyl-N-acetylglucosamine deacetylase, found in Blochmanniella floridana.